Reading from the N-terminus, the 320-residue chain is MNHTSDTALLIVNLGTPEAPTAAAVRRYLGEFLSDRRVVSIPPLFWKPLLHMVILPIRGPRSASKYAKVWLQEGSPLSVYTRRIAEGLTQHLPDWRVAWAMRYGAPALTKALDALQAQQVRRIVILPLYPQYSTTTTASVQDVVEAWCKRTPQVQVECIQDYAEDSAWVAAVAASIRRHWQAHGRSEKLMFSFHGLPQRVANNGDPYPQRCQVSASLIAAALDLNESEWVLGYQSRFGAERWLQPYAEPTLWALAESGIRRFDLVCPGFSVDCLETLEEVALGFSETLAARGATMRYIPCLNDDPAHVQALAGLAQRALL.

Residues His-194 and Glu-275 each coordinate Fe cation.

It belongs to the ferrochelatase family.

It is found in the cytoplasm. It catalyses the reaction heme b + 2 H(+) = protoporphyrin IX + Fe(2+). It participates in porphyrin-containing compound metabolism; protoheme biosynthesis; protoheme from protoporphyrin-IX: step 1/1. In terms of biological role, catalyzes the ferrous insertion into protoporphyrin IX. The sequence is that of Ferrochelatase from Xylella fastidiosa (strain 9a5c).